The chain runs to 154 residues: Superoxide dismutase [Cu-Zn] (154 aa).

Cu cation contacts are provided by H47, H49, and H64. The cysteines at positions 58 and 147 are disulfide-linked. Zn(2+) is bound by residues H64, H72, H81, and D84. Residue H121 participates in Cu cation binding. Positions 125 to 137 (DDLGRSEHPESKK) are enriched in basic and acidic residues. The disordered stretch occupies residues 125-144 (DDLGRSEHPESKKTGNAGAR). R144 contacts substrate.

It belongs to the Cu-Zn superoxide dismutase family. As to quaternary structure, homodimer. Cu cation serves as cofactor. The cofactor is Zn(2+).

It localises to the cytoplasm. It carries out the reaction 2 superoxide + 2 H(+) = H2O2 + O2. In terms of biological role, destroys radicals which are normally produced within the cells and which are toxic to biological systems. The chain is Superoxide dismutase [Cu-Zn] (sodC) from Aspergillus oryzae (strain ATCC 42149 / RIB 40) (Yellow koji mold).